A 70-amino-acid polypeptide reads, in one-letter code: Large ribosomal subunit protein bL31 (70 aa).

Zn(2+) contacts are provided by C16, C18, C37, and C40.

The protein belongs to the bacterial ribosomal protein bL31 family. Type A subfamily. In terms of assembly, part of the 50S ribosomal subunit. Zn(2+) serves as cofactor.

Functionally, binds the 23S rRNA. The chain is Large ribosomal subunit protein bL31 from Proteus mirabilis (strain HI4320).